The sequence spans 332 residues: Methionine synthase (332 aa).

Residues His211, Cys213, and Cys296 each coordinate Zn(2+).

The protein belongs to the archaeal MetE family. The cofactor is Zn(2+).

It functions in the pathway amino-acid biosynthesis; L-methionine biosynthesis via de novo pathway. Catalyzes the transfer of a methyl group to L-homocysteine resulting in methionine formation. The physiological methyl donor is unknown. In Saccharolobus islandicus (strain Y.G.57.14 / Yellowstone #1) (Sulfolobus islandicus), this protein is Methionine synthase.